Here is a 51-residue protein sequence, read N- to C-terminus: Insulin (51 aa).

Cystine bridges form between Cys-7–Cys-37, Cys-19–Cys-50, and Cys-36–Cys-41.

This sequence belongs to the insulin family. In terms of assembly, heterodimer of a B chain and an A chain linked by two disulfide bonds.

Its subcellular location is the secreted. Functionally, insulin decreases blood glucose concentration. It increases cell permeability to monosaccharides, amino acids and fatty acids. It accelerates glycolysis, the pentose phosphate cycle, and glycogen synthesis in liver. The protein is Insulin (INS) of Balaenoptera borealis (Sei whale).